We begin with the raw amino-acid sequence, 507 residues long: MEKWYLMTVVVLIGLTVRWTVSLNSYSGAGKPPMFGDYEAQRHWQEITFNLPVKQWYFNSSDNNLQYWGLDYPPPTAYHSLLCAYVAKFINPDWIALHTSRGYESQAHKLFMRTTVLIADLLIYIPAVVLYCCCLKEISTKKKIANALCILLYPGLILIDYGHFQYNSVSLGFALWGVLGISCDCDLLGSLAFCLAINYKQMELYHALPFFCFLLGKCFKKGLKGKGFVLLVKLACIVVASFVLCWLPFFTEREQTLQVLRRLFPVDRGLFEDKVANIWCSFNVFLKIKDILPRHIQLIMSFCFTFLSLLPACIKLILQPSSKGFKFTLVSCALSFFLFSFQVHEKSILLVSLPVCLVLSEIPFMSTWFLLVSTFSMLPLLLKDELLMPSVVTTMAFFIACVTSFSIFEKTSEEELQLKSFSISVRKYLPCFTFLSRIIQYLFLISVITMVLLTLMTVTLGPPQKLPDLFSVLVCFVSCLNFLFFLVYFNIIIVWDSKSGRNQKKIS.

The Cytoplasmic portion of the chain corresponds to 1–3 (MEK). A helical transmembrane segment spans residues 4-24 (WYLMTVVVLIGLTVRWTVSLN). The Lumenal portion of the chain corresponds to 25–114 (SYSGAGKPPM…SQAHKLFMRT (90 aa)). The N-linked (GlcNAc...) asparagine glycan is linked to Asn-59. A helical transmembrane segment spans residues 115–135 (TVLIADLLIYIPAVVLYCCCL). The Cytoplasmic segment spans residues 136–143 (KEISTKKK). The helical transmembrane segment at 144–164 (IANALCILLYPGLILIDYGHF) threads the bilayer. The Lumenal portion of the chain corresponds to 165-172 (QYNSVSLG). The chain crosses the membrane as a helical span at residues 173 to 193 (FALWGVLGISCDCDLLGSLAF). The Cytoplasmic portion of the chain corresponds to 194–226 (CLAINYKQMELYHALPFFCFLLGKCFKKGLKGK). The helical transmembrane segment at 227-247 (GFVLLVKLACIVVASFVLCWL) threads the bilayer. Over 248–297 (PFFTEREQTLQVLRRLFPVDRGLFEDKVANIWCSFNVFLKIKDILPRHIQ) the chain is Lumenal. The helical transmembrane segment at 298–318 (LIMSFCFTFLSLLPACIKLIL) threads the bilayer. The Cytoplasmic segment spans residues 319-323 (QPSSK). A helical transmembrane segment spans residues 324–344 (GFKFTLVSCALSFFLFSFQVH). Residues 345 to 361 (EKSILLVSLPVCLVLSE) lie on the Lumenal side of the membrane. Residues 362-382 (IPFMSTWFLLVSTFSMLPLLL) traverse the membrane as a helical segment. At 383 to 387 (KDELL) the chain is on the cytoplasmic side. A helical transmembrane segment spans residues 388 to 408 (MPSVVTTMAFFIACVTSFSIF). The Lumenal portion of the chain corresponds to 409-437 (EKTSEEELQLKSFSISVRKYLPCFTFLSR). A helical membrane pass occupies residues 438–458 (IIQYLFLISVITMVLLTLMTV). At 459–473 (TLGPPQKLPDLFSVL) the chain is on the cytoplasmic side. A helical transmembrane segment spans residues 474–494 (VCFVSCLNFLFFLVYFNIIIV). Residues 495–507 (WDSKSGRNQKKIS) are Lumenal-facing.

This sequence belongs to the ALG6/ALG8 glucosyltransferase family.

Its subcellular location is the endoplasmic reticulum membrane. It catalyses the reaction an alpha-D-Man-(1-&gt;2)-alpha-D-Man-(1-&gt;2)-alpha-D-Man-(1-&gt;3)-[alpha-D-Man-(1-&gt;2)-alpha-D-Man-(1-&gt;3)-[alpha-D-Man-(1-&gt;2)-alpha-D-Man-(1-&gt;6)]-alpha-D-Man-(1-&gt;6)]-beta-D-Man-(1-&gt;4)-beta-D-GlcNAc-(1-&gt;4)-alpha-D-GlcNAc-diphospho-di-trans,poly-cis-dolichol + a di-trans,poly-cis-dolichyl beta-D-glucosyl phosphate = an alpha-D-Glc-(1-&gt;3)-alpha-D-Man-(1-&gt;2)-alpha-D-Man-(1-&gt;2)-alpha-D-Man-(1-&gt;3)-[alpha-D-Man-(1-&gt;2)-alpha-D-Man-(1-&gt;3)-[alpha-D-Man-(1-&gt;2)-alpha-D-Man-(1-&gt;6)]-alpha-D-Man-(1-&gt;6)]-beta-D-Man-(1-&gt;4)-beta-D-GlcNAc-(1-&gt;4)-alpha-D-GlcNAc-diphospho-di-trans,poly-cis-dolichol + a di-trans,poly-cis-dolichyl phosphate + H(+). It participates in protein modification; protein glycosylation. Dolichyl pyrophosphate Man9GlcNAc2 alpha-1,3-glucosyltransferase that operates in the biosynthetic pathway of dolichol-linked oligosaccharides, the glycan precursors employed in protein asparagine (N)-glycosylation. The assembly of dolichol-linked oligosaccharides begins on the cytosolic side of the endoplasmic reticulum membrane and finishes in its lumen. The sequential addition of sugars to dolichol pyrophosphate produces dolichol-linked oligosaccharides containing fourteen sugars, including two GlcNAcs, nine mannoses and three glucoses. Once assembled, the oligosaccharide is transferred from the lipid to nascent proteins by oligosaccharyltransferases. In the lumen of the endoplasmic reticulum, adds the first glucose residue from dolichyl phosphate glucose (Dol-P-Glc) onto the lipid-linked oligosaccharide intermediate Man(9)GlcNAc(2)-PP-Dol to produce Glc(1)Man(9)GlcNAc(2)-PP-Dol. Glc(1)Man(9)GlcNAc(2)-PP-Dol is a substrate for ALG8, the following enzyme in the biosynthetic pathway. This is Dolichyl pyrophosphate Man9GlcNAc2 alpha-1,3-glucosyltransferase from Pongo abelii (Sumatran orangutan).